Consider the following 249-residue polypeptide: Tabinhibitin 4 (249 aa).

Positions M1–T23 are cleaved as a signal peptide. A Cell attachment site motif is present at residues R31–D33. The 144-residue stretch at L64 to F207 folds into the SCP domain. The Cell attachment site signature appears at R220–D222.

It belongs to the CRISP family. As to expression, expressed in salivary glands.

It localises to the secreted. Functionally, inhibits platelet aggregation induced by all agonists tested (ADP, arachidonic acid, the thromboxane A2 analog U46619, thrombin, and snake venom snaclecs (TMVA that activates platelet through GPIB, and stejnulxin that specifically acts through GPVI (GP6))). May act by competing with fibrinogen for binding to glycoprotein IIb/IIIa (ITGA2B/ITGB3). This Tabanus yao (Horsefly) protein is Tabinhibitin 4.